Consider the following 92-residue polypeptide: Small ribosomal subunit protein uS15c (92 aa).

The protein belongs to the universal ribosomal protein uS15 family. As to quaternary structure, part of the 30S ribosomal subunit.

Its subcellular location is the plastid. The protein localises to the chloroplast. This is Small ribosomal subunit protein uS15c (rps15) from Carica papaya (Papaya).